We begin with the raw amino-acid sequence, 488 residues long: Aspartyl/glutamyl-tRNA(Asn/Gln) amidotransferase subunit B (488 aa).

This sequence belongs to the GatB/GatE family. GatB subfamily. Heterotrimer of A, B and C subunits.

It catalyses the reaction L-glutamyl-tRNA(Gln) + L-glutamine + ATP + H2O = L-glutaminyl-tRNA(Gln) + L-glutamate + ADP + phosphate + H(+). It carries out the reaction L-aspartyl-tRNA(Asn) + L-glutamine + ATP + H2O = L-asparaginyl-tRNA(Asn) + L-glutamate + ADP + phosphate + 2 H(+). In terms of biological role, allows the formation of correctly charged Asn-tRNA(Asn) or Gln-tRNA(Gln) through the transamidation of misacylated Asp-tRNA(Asn) or Glu-tRNA(Gln) in organisms which lack either or both of asparaginyl-tRNA or glutaminyl-tRNA synthetases. The reaction takes place in the presence of glutamine and ATP through an activated phospho-Asp-tRNA(Asn) or phospho-Glu-tRNA(Gln). The polypeptide is Aspartyl/glutamyl-tRNA(Asn/Gln) amidotransferase subunit B (Ralstonia nicotianae (strain ATCC BAA-1114 / GMI1000) (Ralstonia solanacearum)).